The chain runs to 780 residues: Ino eighty subunit 1 (780 aa).

2 disordered regions span residues 1 to 25 and 563 to 780; these read MADV…QQIH and ANGP…PGWN. Residues 563–584 show a composition bias toward basic and acidic residues; it reads ANGPRRDRKKEREERQKAREEA. The span at 600-613 shows a compositional bias: basic residues; it reads SRARAQRNAKRKLA. Positions 614–635 are enriched in low complexity; that stretch reads RAAAAASSTPSASTPKTAAARS. Acidic residues-rich tracts occupy residues 676-686 and 723-751; these read LEGEESLDDID and DADD…EGDD.

As to quaternary structure, component of the chromatin-remodeling INO80 complex.

The protein localises to the nucleus. Its function is as follows. Probably involved in transcription regulation via its interaction with the INO80 complex, a chromatin-remodeling complex. In Emericella nidulans (strain FGSC A4 / ATCC 38163 / CBS 112.46 / NRRL 194 / M139) (Aspergillus nidulans), this protein is Ino eighty subunit 1.